Reading from the N-terminus, the 513-residue chain is ATP synthase subunit alpha (513 aa).

169-176 contributes to the ATP binding site; that stretch reads GDRQTGKT.

Belongs to the ATPase alpha/beta chains family. F-type ATPases have 2 components, CF(1) - the catalytic core - and CF(0) - the membrane proton channel. CF(1) has five subunits: alpha(3), beta(3), gamma(1), delta(1), epsilon(1). CF(0) has three main subunits: a(1), b(2) and c(9-12). The alpha and beta chains form an alternating ring which encloses part of the gamma chain. CF(1) is attached to CF(0) by a central stalk formed by the gamma and epsilon chains, while a peripheral stalk is formed by the delta and b chains.

The protein resides in the cell inner membrane. The enzyme catalyses ATP + H2O + 4 H(+)(in) = ADP + phosphate + 5 H(+)(out). Functionally, produces ATP from ADP in the presence of a proton gradient across the membrane. The alpha chain is a regulatory subunit. This chain is ATP synthase subunit alpha, found in Ralstonia pickettii (strain 12J).